A 491-amino-acid polypeptide reads, in one-letter code: MDLEKKPQDKVETAEIDVKEDPFLVTWQSPTDPKNPKNWIYARKWTQLILVSAFALLGPMASSMVAPCLDQIADRFHIQNSTEKALILSIYLLVFAISPMISAPLSEVFGRRMLLQVGNVIFIVFNMACGLARTKAQMYIFRFLAGFGSATPMGLGSGTISDLFTPDERGKAVAVMSLAPLLGPTIGPVVSGFIAEYTTYKWIFWSTTIFSGFIFALSLPLLAETYPKTLLGEKARKLNKSEKTNKYHTEWNLEHIPRLKLVTPALMRPIRMLFTQPIVILCSTYMAIQYGILYLVLTTYPTLWTEEYHERPSIAGLNYIASGIGLIFGSQASGIFIDKTFRYLKRRNNGKMAPEFRVPVILLGTFFFPAGLFIYGWTAQYHTHWIGPDIGAAMFNIGLMLGWRGIQTYLIDSFMIYAASSTAVACCVRSIAAFAFPLFGQDMYDTLGYGWGNSLLAFIVLGSSIITCSLLWFGGKRLRALSSMVIFKDDV.

The next 12 helical transmembrane spans lie at 48–68, 85–105, 112–132, 140–160, 174–194, 202–222, 277–297, 317–337, 358–378, 383–403, 408–428, and 455–475; these read LILV…VAPC, ALIL…SAPL, RMLL…CGLA, IFRF…SGTI, AVMS…SGFI, WIFW…LPLL, PIVI…YLVL, LNYI…GIFI, VPVI…YGWT, THWI…MLGW, TYLI…ACCV, and LLAF…WFGG.

This sequence belongs to the major facilitator superfamily.

The protein localises to the membrane. This is an uncharacterized protein from Schizosaccharomyces pombe (strain 972 / ATCC 24843) (Fission yeast).